The following is a 126-amino-acid chain: Holo-[acyl-carrier-protein] synthase (126 aa).

Residues aspartate 6 and glutamate 55 each coordinate Mg(2+).

Belongs to the P-Pant transferase superfamily. AcpS family. The cofactor is Mg(2+).

Its subcellular location is the cytoplasm. The enzyme catalyses apo-[ACP] + CoA = holo-[ACP] + adenosine 3',5'-bisphosphate + H(+). Functionally, transfers the 4'-phosphopantetheine moiety from coenzyme A to a Ser of acyl-carrier-protein. This is Holo-[acyl-carrier-protein] synthase from Chlorobium limicola (strain DSM 245 / NBRC 103803 / 6330).